A 419-amino-acid polypeptide reads, in one-letter code: DNA ligase (419 aa).

Residues 1-120 (MLNHFPGHCS…ARQKRGAHTN (120 aa)) are NTD. The segment at 121-317 (RGMIPPMLVK…NYHSAHLAKL (197 aa)) is AD domain. K151 functions as the N6-AMP-lysine intermediate in the catalytic mechanism. The ATP site is built by K151, E203, and F232. E203 lines the a divalent metal cation pocket. A divalent metal cation is bound at residue E291. The ATP site is built by I294 and K316. The tract at residues 318-419 (KPLLDAEFIL…REPINVLEII (102 aa)) is OB domain.

The protein belongs to the ATP-dependent DNA ligase family.

Its subcellular location is the virion. The catalysed reaction is ATP + (deoxyribonucleotide)n-3'-hydroxyl + 5'-phospho-(deoxyribonucleotide)m = (deoxyribonucleotide)n+m + AMP + diphosphate.. In terms of biological role, very low-fidelity DNA ligase that seals nicks in double-stranded DNA during DNA repair. Together with the viral repair DNA polymerase X, fills the single nucleotide gaps generated by the AP endonuclease. It is not essential for viral replication and recombination. Displays a very low adenylation activity towards DNA with 3'-dideoxy- or 3'-amino-terminated nicks compared to regular nick DNA. This African swine fever virus (isolate Tick/South Africa/Pretoriuskop Pr4/1996) (ASFV) protein is DNA ligase.